An 85-amino-acid chain; its full sequence is BmK AGP-SYPU2 (85 aa).

The N-terminal stretch at 1-19 is a signal peptide; sequence MNYMVIISLALLVMTGVES. The LCN-type CS-alpha/beta domain maps to 21 to 83; sequence KDGYIADDRN…ARIMKPGRCN (63 aa). 4 cysteine pairs are disulfide-bonded: Cys-31/Cys-82, Cys-35/Cys-55, Cys-41/Cys-65, and Cys-45/Cys-67.

The protein belongs to the long (4 C-C) scorpion toxin superfamily. Sodium channel inhibitor family. Alpha subfamily. As to expression, expressed by the venom gland.

It is found in the secreted. Alpha toxins bind voltage-independently at site-3 of sodium channels (Nav) and inhibit the inactivation of the activated channels, thereby blocking neuronal transmission. Shows analgesic activity when intraperitoneally injected into mice. The sequence is that of BmK AGP-SYPU2 from Olivierus martensii (Manchurian scorpion).